We begin with the raw amino-acid sequence, 301 residues long: uncharacterized protein (301 aa).

The first 22 residues, 1–22, serve as a signal peptide directing secretion; the sequence is MPGRFTVALVIALGGTCGVADA. Residues 31–300 form the GP-PDE domain; sequence PMIVAHRAGT…DSPLAAQQWR (270 aa).

This is an uncharacterized protein from Mycobacterium tuberculosis (strain ATCC 25618 / H37Rv).